Here is a 773-residue protein sequence, read N- to C-terminus: Ribosomal protein S6 kinase alpha-4 (773 aa).

The Protein kinase 1 domain maps to 33–301 (FALLKVLGTG…AQEVKSHPFF (269 aa)). Residues 39-47 (LGTGAYGKV) and K65 contribute to the ATP site. The active-site Proton acceptor is D161. Position 196 is a phosphoserine; by autocatalysis (S196). The AGC-kinase C-terminal domain occupies 302-371 (QGLDWVALAA…VAPSILFDHN (70 aa)). Residue S343 is modified to Phosphoserine; by MAPK1, MAPK3 and MAPK14. At S347 the chain carries Phosphoserine. Phosphoserine; by autocatalysis occurs at positions 360 and 365. ATP contacts are provided by residues 417 to 425 (LGQGSFSVC) and K440. The region spanning 417–674 (LGQGSFSVCR…LEGLRSSSWL (258 aa)) is the Protein kinase 2 domain. The Proton acceptor role is filled by D530. Position 542 is a phosphothreonine (T542). A Phosphothreonine; by MAPK1, MAPK3 and MAPK14 modification is found at T568. A phosphoserine mark is found at S634 and S678. 2 disordered regions span residues 674–696 (LQDG…SSGP) and 728–773 (AKRR…LSPS). T687 bears the Phosphothreonine mark. Residues S737 and S745 each carry the phosphoserine; by autocatalysis modification.

It belongs to the protein kinase superfamily. AGC Ser/Thr protein kinase family. S6 kinase subfamily. Forms a complex with either MAPK1/ERK2 or MAPK3/ERK1 in quiescent cells which transiently dissociates following mitogenic stimulation. Also associates with MAPK14/p38-alpha. Activated RPS6KA4 associates with and phosphorylates the NF-kappa-B p65 subunit RELA. The cofactor is Mg(2+). Post-translationally, ser-343 and Thr-568 phosphorylation is required for kinase activity. Ser-343 and Ser-196 are autophosphorylated by the C-terminal kinase domain, and their phosphorylation is essential for the catalytic activity of the N-terminal kinase domain. Phosphorylated at Ser-343, Thr-568 and Thr-687 by MAPK1/ERK2, MAPK3/ERK1 and MAPK14/p38-alpha. Autophosphorylated at Ser-737 and Ser-745 by the N-terminal kinase domain.

Its subcellular location is the nucleus. It carries out the reaction L-seryl-[protein] + ATP = O-phospho-L-seryl-[protein] + ADP + H(+). It catalyses the reaction L-threonyl-[protein] + ATP = O-phospho-L-threonyl-[protein] + ADP + H(+). Activated by phosphorylation at Ser-343, Thr-568 and Thr-687 by MAPK1/ERK2, MAPK3/ERK1 and MAPK14/p38-alpha, and by further autophosphorylation of Ser-196, Ser-360 and Ser-365 by the activated C-terminal kinase domain. In terms of biological role, serine/threonine-protein kinase that is required for the mitogen or stress-induced phosphorylation of the transcription factors CREB1 and ATF1 and for the regulation of the transcription factor RELA, and that contributes to gene activation by histone phosphorylation and functions in the regulation of inflammatory genes. Phosphorylates CREB1 and ATF1 in response to mitogenic or stress stimuli such as UV-C irradiation, epidermal growth factor (EGF) and anisomycin. Plays an essential role in the control of RELA transcriptional activity in response to TNF. Phosphorylates 'Ser-10' of histone H3 in response to mitogenics, stress stimuli and EGF, which results in the transcriptional activation of several immediate early genes, including proto-oncogenes c-fos/FOS and c-jun/JUN. May also phosphorylate 'Ser-28' of histone H3. Mediates the mitogen- and stress-induced phosphorylation of high mobility group protein 1 (HMGN1/HMG14). In lipopolysaccharide-stimulated primary macrophages, acts downstream of the Toll-like receptor TLR4 to limit the production of pro-inflammatory cytokines. Functions probably by inducing transcription of the MAP kinase phosphatase DUSP1 and the anti-inflammatory cytokine interleukin 10 (IL10), via CREB1 and ATF1 transcription factors. This chain is Ribosomal protein S6 kinase alpha-4 (Rps6ka4), found in Mus musculus (Mouse).